The sequence spans 572 residues: Urease subunit alpha (572 aa).

The Urease domain occupies Gly-134–Phe-572. 3 residues coordinate Ni(2+): His-139, His-141, and Lys-222. Residue Lys-222 is modified to N6-carboxylysine. Position 224 (His-224) interacts with substrate. His-251 and His-277 together coordinate Ni(2+). His-325 functions as the Proton donor in the catalytic mechanism. Asp-365 contacts Ni(2+).

It belongs to the metallo-dependent hydrolases superfamily. Urease alpha subunit family. In terms of assembly, heterotrimer of UreA (gamma), UreB (beta) and UreC (alpha) subunits. Three heterotrimers associate to form the active enzyme. Requires Ni cation as cofactor. Post-translationally, carboxylation allows a single lysine to coordinate two nickel ions.

The protein resides in the cytoplasm. The catalysed reaction is urea + 2 H2O + H(+) = hydrogencarbonate + 2 NH4(+). It participates in nitrogen metabolism; urea degradation; CO(2) and NH(3) from urea (urease route): step 1/1. This chain is Urease subunit alpha, found in Paracidovorax citrulli (strain AAC00-1) (Acidovorax citrulli).